Here is an 897-residue protein sequence, read N- to C-terminus: Valine--tRNA ligase (897 aa).

The 'HIGH' region signature appears at 46–56 (PNVTGSLHMGH). Residues 532-536 (KMSKT) carry the 'KMSKS' region motif. Position 535 (Lys535) interacts with ATP. The stretch at 839–897 (LRRSLEKLDKESGVLAARLDNASYLANAPAELVTESRAKLAEQRAQAAILAEQLARLEN) forms a coiled coil.

This sequence belongs to the class-I aminoacyl-tRNA synthetase family. ValS type 1 subfamily. In terms of assembly, monomer.

It is found in the cytoplasm. It carries out the reaction tRNA(Val) + L-valine + ATP = L-valyl-tRNA(Val) + AMP + diphosphate. Catalyzes the attachment of valine to tRNA(Val). As ValRS can inadvertently accommodate and process structurally similar amino acids such as threonine, to avoid such errors, it has a 'posttransfer' editing activity that hydrolyzes mischarged Thr-tRNA(Val) in a tRNA-dependent manner. The protein is Valine--tRNA ligase of Gloeobacter violaceus (strain ATCC 29082 / PCC 7421).